Consider the following 543-residue polypeptide: Protein male-specific lethal-3 (543 aa).

The Chromo domain occupies 10–90; it reads LFNRGEKVLC…KLQRELAEAA (81 aa). The disordered stretch occupies residues 93-247; sequence QKTGGYSYKD…THTTDAEKRI (155 aa). Basic and acidic residues-rich tracts occupy residues 180–202, 210–224, and 234–247; these read RSRDGSGNRSRDGSGNRSRDNSS, KSKGGDKNDDGERRS, and SPKDTHTTDAEKRI. Residues 249-542 form the MRG domain; sequence QEDRVMLRIS…PLIDQGRELS (294 aa).

Component of the male-specific lethal (MSL) histone acetyltransferase complex, composed of mof, mle, msl-1, msl-2 and msl-3 proteins, as well as roX1 and roX2 non-coding RNAs. In terms of processing, ubiquitinated by msl-2.

Its subcellular location is the nucleus. It is found in the chromosome. Functionally, component of the male-specific lethal (MSL) histone acetyltransferase complex, a multiprotein complex essential for elevating transcription of the single X chromosome in the male (X chromosome dosage compensation). The MSL complex specifically associates with the single X chromosome in males and mediates formation of H4K16ac, promoting a two-fold activation of X chromosome. Acts as a histone reader that specifically recognizes and binds histone H3 trimethylated at 'Lys-36' (H3K36me3) and histone H4 monomethylated at 'Lys-20' (H4K20me1). Within the MSL complex, mediates the spreading of the MSL complex from initiation sites on the male X chromosome to flanking chromatin. Following initial recruitment of the MSL complex to male X chromosome by msl-2, msl-3 binds H3K36me3 and promotes spreading of the MSL complex in cis. In addition to its role in dosage compensation in males, promotes germline stem cell differentiation in females: recognizes and binds H3K36me3, promoting recruitment of the ATAC complex and transcription of genes, such as RpS19b. In Drosophila virilis (Fruit fly), this protein is Protein male-specific lethal-3 (msl-3).